The following is a 114-amino-acid chain: UPF0145 protein PYRAB04900 (114 aa).

This sequence belongs to the UPF0145 family.

The protein is UPF0145 protein PYRAB04900 of Pyrococcus abyssi (strain GE5 / Orsay).